The chain runs to 399 residues: MNFRQLLLHLPRYLGASGSPRRLWWSPSLDTISSVGSWRGRSSKSPAHWNQVVSEAEKIVGYPTSFMSLRCLLSDELSNIAMQVRKLVGTQHPLLTTARGLVHDSWNSLQLRGLVVLLISKAAGPSSVNTSCQNYDMVSGIYSCQRSLAEITELIHIALLVHRGIVNLNELQSSDGPLKDMQFGNKIAILSGDFLLANACNGLALLQNTKVVELLASALMDLVQGVYHENSTSKESYITDDIGISTWKEQTFLSHGALLAKSCQAAMELAKHDAEVQNMAFQYGKHMAMSHKINSDVQPFIKEKTSDSMTFNLNSAPVVLHQEFLGRDLWIKQIGEAQEKGRLDYAKLRERIKAGKGVTSAIDLCRYHGNKALEALESFPPSEARSALENIVFAVTRFS.

It belongs to the FPP/GGPP synthase family. In terms of assembly, heterotetramer composed of 2 PDSS1/DPS1 and 2 PDSS2/DLP1 subunits.

It localises to the mitochondrion. It carries out the reaction 7 isopentenyl diphosphate + (2E,6E)-farnesyl diphosphate = all-trans-decaprenyl diphosphate + 7 diphosphate. The catalysed reaction is 6 isopentenyl diphosphate + (2E,6E)-farnesyl diphosphate = all-trans-nonaprenyl diphosphate + 6 diphosphate. Its pathway is cofactor biosynthesis; ubiquinone biosynthesis. Functionally, heterotetrameric enzyme that catalyzes the condensation of farnesyl diphosphate (FPP), which acts as a primer, and isopentenyl diphosphate (IPP) to produce prenyl diphosphates of varying chain lengths and participates in the determination of the side chain of ubiquinone. Supplies nona and decaprenyl diphosphate, the precursors for the side chain of the isoprenoid quinones ubiquinone-9 (Q9) and ubiquinone-10 (Q10) respectively. The enzyme adds isopentenyl diphosphate molecules sequentially to farnesyl diphosphate with trans stereochemistry. May play a role during cerebellar development. May regulate mitochondrial respiratory chain function. This chain is All trans-polyprenyl-diphosphate synthase PDSS2, found in Homo sapiens (Human).